The sequence spans 260 residues: Phosphatidylglycerol--prolipoprotein diacylglyceryl transferase (260 aa).

3 helical membrane-spanning segments follow: residues 16–36 (LEFRWYGLMYILGFIAAYFIV), 55–75 (VIFSLAIGVILGGRLGYILFY), and 87–107 (LFAVWEGGMSFHGGLLGVILA). Arginine 138 lines the a 1,2-diacyl-sn-glycero-3-phospho-(1'-sn-glycerol) pocket. 2 consecutive transmembrane segments (helical) span residues 198–218 (GVVFWTFIAFYGLFRFLVEFF) and 232–252 (FSMGQLLSFPMFLLGLTMAVL).

Belongs to the Lgt family.

The protein localises to the cell inner membrane. It carries out the reaction L-cysteinyl-[prolipoprotein] + a 1,2-diacyl-sn-glycero-3-phospho-(1'-sn-glycerol) = an S-1,2-diacyl-sn-glyceryl-L-cysteinyl-[prolipoprotein] + sn-glycerol 1-phosphate + H(+). Its pathway is protein modification; lipoprotein biosynthesis (diacylglyceryl transfer). Functionally, catalyzes the transfer of the diacylglyceryl group from phosphatidylglycerol to the sulfhydryl group of the N-terminal cysteine of a prolipoprotein, the first step in the formation of mature lipoproteins. This Geobacter sulfurreducens (strain ATCC 51573 / DSM 12127 / PCA) protein is Phosphatidylglycerol--prolipoprotein diacylglyceryl transferase.